The primary structure comprises 357 residues: Phospho-N-acetylmuramoyl-pentapeptide-transferase (357 aa).

The next 10 membrane-spanning stretches (helical) occupy residues 4-24, 52-72, 77-97, 115-135, 153-173, 186-206, 228-248, 255-275, 280-300, and 334-354; these read QILFSGVIGLFLTLVGTPLLI, TMGGIAFILATIIAYFMSKVI, PTFSGLLVLGLMAGMGLVGFL, AKMAGQLIVGIAFAVLALQFA, FGWTIGPVLFVIWALFMILAM, LATGAATMVFGAYTFIGVWQF, PLDLAVVASALMGACFGFLWW, IFMGDTGSLALGGALAGLAIC, LLVALLGGLFVLITMSVVIQV, and FWIIQGMCVIVGLGLFYAGWA.

This sequence belongs to the glycosyltransferase 4 family. MraY subfamily. The cofactor is Mg(2+).

Its subcellular location is the cell membrane. The enzyme catalyses UDP-N-acetyl-alpha-D-muramoyl-L-alanyl-gamma-D-glutamyl-meso-2,6-diaminopimeloyl-D-alanyl-D-alanine + di-trans,octa-cis-undecaprenyl phosphate = di-trans,octa-cis-undecaprenyl diphospho-N-acetyl-alpha-D-muramoyl-L-alanyl-D-glutamyl-meso-2,6-diaminopimeloyl-D-alanyl-D-alanine + UMP. Its pathway is cell wall biogenesis; peptidoglycan biosynthesis. Catalyzes the initial step of the lipid cycle reactions in the biosynthesis of the cell wall peptidoglycan: transfers peptidoglycan precursor phospho-MurNAc-pentapeptide from UDP-MurNAc-pentapeptide onto the lipid carrier undecaprenyl phosphate, yielding undecaprenyl-pyrophosphoryl-MurNAc-pentapeptide, known as lipid I. This is Phospho-N-acetylmuramoyl-pentapeptide-transferase from Streptomyces avermitilis (strain ATCC 31267 / DSM 46492 / JCM 5070 / NBRC 14893 / NCIMB 12804 / NRRL 8165 / MA-4680).